Consider the following 484-residue polypeptide: tRNA sulfurtransferase (484 aa).

The THUMP domain maps to 63-167 (QAFGERLACI…GDKLYMVTKR (105 aa)). ATP-binding positions include 185–186 (LI), Lys267, Gly289, and Gln298. A disulfide bond links Cys346 and Cys458. The region spanning 406-484 (IDTNEVVIDI…GYHNVKVYRP (79 aa)) is the Rhodanese domain. Catalysis depends on Cys458, which acts as the Cysteine persulfide intermediate.

This sequence belongs to the ThiI family.

It localises to the cytoplasm. It carries out the reaction [ThiI sulfur-carrier protein]-S-sulfanyl-L-cysteine + a uridine in tRNA + 2 reduced [2Fe-2S]-[ferredoxin] + ATP + H(+) = [ThiI sulfur-carrier protein]-L-cysteine + a 4-thiouridine in tRNA + 2 oxidized [2Fe-2S]-[ferredoxin] + AMP + diphosphate. The catalysed reaction is [ThiS sulfur-carrier protein]-C-terminal Gly-Gly-AMP + S-sulfanyl-L-cysteinyl-[cysteine desulfurase] + AH2 = [ThiS sulfur-carrier protein]-C-terminal-Gly-aminoethanethioate + L-cysteinyl-[cysteine desulfurase] + A + AMP + 2 H(+). It functions in the pathway cofactor biosynthesis; thiamine diphosphate biosynthesis. Its function is as follows. Catalyzes the ATP-dependent transfer of a sulfur to tRNA to produce 4-thiouridine in position 8 of tRNAs, which functions as a near-UV photosensor. Also catalyzes the transfer of sulfur to the sulfur carrier protein ThiS, forming ThiS-thiocarboxylate. This is a step in the synthesis of thiazole, in the thiamine biosynthesis pathway. The sulfur is donated as persulfide by IscS. The sequence is that of tRNA sulfurtransferase from Shewanella oneidensis (strain ATCC 700550 / JCM 31522 / CIP 106686 / LMG 19005 / NCIMB 14063 / MR-1).